The primary structure comprises 192 residues: Crossover junction endodeoxyribonuclease RuvC (192 aa).

Residues aspartate 8, glutamate 67, and aspartate 139 contribute to the active site. Mg(2+)-binding residues include aspartate 8, glutamate 67, and aspartate 139.

Belongs to the RuvC family. In terms of assembly, homodimer which binds Holliday junction (HJ) DNA. The HJ becomes 2-fold symmetrical on binding to RuvC with unstacked arms; it has a different conformation from HJ DNA in complex with RuvA. In the full resolvosome a probable DNA-RuvA(4)-RuvB(12)-RuvC(2) complex forms which resolves the HJ. Mg(2+) is required as a cofactor.

The protein localises to the cytoplasm. The enzyme catalyses Endonucleolytic cleavage at a junction such as a reciprocal single-stranded crossover between two homologous DNA duplexes (Holliday junction).. Its function is as follows. The RuvA-RuvB-RuvC complex processes Holliday junction (HJ) DNA during genetic recombination and DNA repair. Endonuclease that resolves HJ intermediates. Cleaves cruciform DNA by making single-stranded nicks across the HJ at symmetrical positions within the homologous arms, yielding a 5'-phosphate and a 3'-hydroxyl group; requires a central core of homology in the junction. The consensus cleavage sequence is 5'-(A/T)TT(C/G)-3'. Cleavage occurs on the 3'-side of the TT dinucleotide at the point of strand exchange. HJ branch migration catalyzed by RuvA-RuvB allows RuvC to scan DNA until it finds its consensus sequence, where it cleaves and resolves the cruciform DNA. This is Crossover junction endodeoxyribonuclease RuvC from Actinobacillus pleuropneumoniae serotype 5b (strain L20).